The following is a 931-amino-acid chain: Short transient receptor potential channel 6 (931 aa).

The disordered stretch occupies residues 1–24 (MNQSPAAFGPRRGGSPAVVAGAGA). Over 1–406 (MNQSPAAFGP…GLRQQTMAVK (406 aa)) the chain is Cytoplasmic. The segment covering 13-24 (GGSPAVVAGAGA) has biased composition (low complexity). ANK repeat units lie at residues 131–160 (MGQN…LSRV), 162–188 (DALL…FAEG), and 217–246 (HDVT…RIER). A helical membrane pass occupies residues 407 to 427 (FLVVLAVAVGLPFLALVYWFA). Residues 428-438 (PCSKMGKIMRG) are Extracellular-facing. The helical transmembrane segment at 439 to 459 (PFMKFVAHAASFTIFLGLLVM) threads the bilayer. Residues 460-487 (NAADRFEGTKILPNETSTDHAKQLFRMK) lie on the Cytoplasmic side of the membrane. A helical membrane pass occupies residues 488–508 (TSCFSWMEMLIISWVIGMIWA). Residues 509–521 (ECKEIWTQGPKEY) are Extracellular-facing. The helical transmembrane segment at 522-542 (LFELWNMLDFGMLAIFAASFI) threads the bilayer. Over 543–592 (ARFMAFWHASKAQSIIDANDTLKDLTKVTLGDNVKYYNLARIKWDPSDPQ) the chain is Cytoplasmic. Residues 593 to 613 (IISEGLYAIAVVLSFSRIAYI) traverse the membrane as a helical segment. Residues 614–636 (LPANESFGPLQISLGRTVKDIFK) lie on the Extracellular side of the membrane. A glycan (N-linked (GlcNAc...) asparagine) is linked at asparagine 617. The stretch at 618 to 647 (ESFGPLQISLGRTVKDIFKFMVIFIMVFVA) is one ANK 4 repeat. Residues 637–657 (FMVIFIMVFVAFMIGMFNLYS) traverse the membrane as a helical segment. Residues 658–674 (YYIGAKQNEAFTTVEES) lie on the Cytoplasmic side of the membrane. A helical membrane pass occupies residues 675-695 (FKTLFWAIFGLSEVKSVVINY). Residues 696 to 706 (NHKFIENIGYV) lie on the Extracellular side of the membrane. Residues 707–727 (LYGVYNVTMVIVLLNMLIAMI) form a helical membrane-spanning segment. Topologically, residues 728–931 (NSSFQEIEDD…MEPNQEESNR (204 aa)) are cytoplasmic. Serine 815 is modified (phosphoserine).

It belongs to the transient receptor (TC 1.A.4) family. STrpC subfamily. TRPC6 sub-subfamily. In terms of assembly, homodimer; forms channel complex. Interacts with MX1 and RNF24. Phosphorylated by FYN, leading to an increase of TRPC6 channel activity.

The protein resides in the cell membrane. It carries out the reaction Ca(2+)(in) = Ca(2+)(out). Thought to form a receptor-activated non-selective calcium permeant cation channel. Probably is operated by a phosphatidylinositol second messenger system activated by receptor tyrosine kinases or G-protein coupled receptors. Activated by diacylglycerol (DAG) in a membrane-delimited fashion, independently of protein kinase C. Seems not to be activated by intracellular calcium store depletion. This Bos taurus (Bovine) protein is Short transient receptor potential channel 6.